A 37-amino-acid chain; its full sequence is Rugosin-C (37 aa).

A disulfide bond links cysteine 31 and cysteine 37.

It belongs to the frog skin active peptide (FSAP) family. Brevinin subfamily. As to expression, expressed by the skin glands.

The protein resides in the secreted. Functionally, has antibacterial activity against Gram-positive bacteria. This is Rugosin-C from Glandirana rugosa (Japanese wrinkled frog).